A 138-amino-acid chain; its full sequence is uncharacterized protein (138 aa).

One can recognise an HTH merR-type domain in the interval 3–72 (LYSISKAAEK…LEDINEFVKD (70 aa)). Residues 6-25 (ISKAAEKTSISSYTLRYYEK) constitute a DNA-binding region (H-T-H motif).

This is an uncharacterized protein from Bacillus subtilis (strain 168).